A 78-amino-acid chain; its full sequence is Large ribosomal subunit protein bL28 (78 aa).

The disordered stretch occupies residues 1–20 (MSRVCQVTGKGPVTGNNISH).

Belongs to the bacterial ribosomal protein bL28 family.

In Stutzerimonas stutzeri (strain A1501) (Pseudomonas stutzeri), this protein is Large ribosomal subunit protein bL28.